Consider the following 451-residue polypeptide: Methylenetetrahydrofolate--tRNA-(uracil-5-)-methyltransferase TrmFO (451 aa).

18 to 23 (GGGLAG) lines the FAD pocket.

The protein belongs to the MnmG family. TrmFO subfamily. Requires FAD as cofactor.

The protein localises to the cytoplasm. It catalyses the reaction uridine(54) in tRNA + (6R)-5,10-methylene-5,6,7,8-tetrahydrofolate + NADH + H(+) = 5-methyluridine(54) in tRNA + (6S)-5,6,7,8-tetrahydrofolate + NAD(+). It carries out the reaction uridine(54) in tRNA + (6R)-5,10-methylene-5,6,7,8-tetrahydrofolate + NADPH + H(+) = 5-methyluridine(54) in tRNA + (6S)-5,6,7,8-tetrahydrofolate + NADP(+). Its function is as follows. Catalyzes the folate-dependent formation of 5-methyl-uridine at position 54 (M-5-U54) in all tRNAs. This chain is Methylenetetrahydrofolate--tRNA-(uracil-5-)-methyltransferase TrmFO, found in Synechococcus sp. (strain JA-3-3Ab) (Cyanobacteria bacterium Yellowstone A-Prime).